The following is a 668-amino-acid chain: DNA ligase (668 aa).

Residues 32–36 (DAEYD), 81–82 (SL), and Glu113 contribute to the NAD(+) site. Lys115 (N6-AMP-lysine intermediate) is an active-site residue. 4 residues coordinate NAD(+): Arg136, Glu173, Lys289, and Lys313. 4 residues coordinate Zn(2+): Cys407, Cys410, Cys425, and Cys431. In terms of domain architecture, BRCT spans 590 to 668 (ASEQPFAGKT…EEELQQALQG (79 aa)).

This sequence belongs to the NAD-dependent DNA ligase family. LigA subfamily. Requires Mg(2+) as cofactor. The cofactor is Mn(2+).

The catalysed reaction is NAD(+) + (deoxyribonucleotide)n-3'-hydroxyl + 5'-phospho-(deoxyribonucleotide)m = (deoxyribonucleotide)n+m + AMP + beta-nicotinamide D-nucleotide.. In terms of biological role, DNA ligase that catalyzes the formation of phosphodiester linkages between 5'-phosphoryl and 3'-hydroxyl groups in double-stranded DNA using NAD as a coenzyme and as the energy source for the reaction. It is essential for DNA replication and repair of damaged DNA. The polypeptide is DNA ligase (Aeromonas hydrophila subsp. hydrophila (strain ATCC 7966 / DSM 30187 / BCRC 13018 / CCUG 14551 / JCM 1027 / KCTC 2358 / NCIMB 9240 / NCTC 8049)).